The primary structure comprises 466 residues: Argininosuccinate lyase (466 aa).

The protein belongs to the lyase 1 family. Argininosuccinate lyase subfamily.

Its subcellular location is the cytoplasm. It carries out the reaction 2-(N(omega)-L-arginino)succinate = fumarate + L-arginine. It functions in the pathway amino-acid biosynthesis; L-arginine biosynthesis; L-arginine from L-ornithine and carbamoyl phosphate: step 3/3. The protein is Argininosuccinate lyase of Roseobacter denitrificans (strain ATCC 33942 / OCh 114) (Erythrobacter sp. (strain OCh 114)).